Here is a 174-residue protein sequence, read N- to C-terminus: uncharacterized protein (174 aa).

This sequence belongs to the IIV-6 196R family.

This is an uncharacterized protein from Acheta domesticus (House cricket).